The primary structure comprises 35 residues: ECLGFGKGCNPSNDQCCKSANLVCSRKHRWCKYEI.

3 cysteine pairs are disulfide-bonded: cysteine 2-cysteine 17, cysteine 9-cysteine 24, and cysteine 16-cysteine 31.

This sequence belongs to the neurotoxin 10 (Hwtx-1) family. 22 (Htx-4) subfamily. In terms of assembly, monomer. In terms of tissue distribution, expressed by the venom gland.

The protein resides in the secreted. Functionally, inhibits selectively tetrodotoxin-sensitive voltage-gated sodium channels (Nav). Does not act by binding to receptor site 3 to slow the inactivation kinetics of sodium currents. In Cyriopagopus hainanus (Chinese bird spider), this protein is Mu-theraphotoxin-Hhn1a.